Reading from the N-terminus, the 196-residue chain is MQRIASIHRQTAETDVHIHLNLDGHGQYNVKTGIGFFDHMLDQLFRHSLIDCDVTVKGDLHIDPHHTIEDCALALGQAVQQALGDKAGITRFSHAYAPMDEALSRVAIDISGRPYLVWHSAFTQPRLGDLDTEMLEHWFLSFAQGAGLTLHVETLYGRNNHHIAESLFKALALALRQAVAIDAGKQGRIPSTKGSL.

Belongs to the imidazoleglycerol-phosphate dehydratase family.

It is found in the cytoplasm. It catalyses the reaction D-erythro-1-(imidazol-4-yl)glycerol 3-phosphate = 3-(imidazol-4-yl)-2-oxopropyl phosphate + H2O. It participates in amino-acid biosynthesis; L-histidine biosynthesis; L-histidine from 5-phospho-alpha-D-ribose 1-diphosphate: step 6/9. This is Imidazoleglycerol-phosphate dehydratase from Zymomonas mobilis subsp. mobilis (strain ATCC 31821 / ZM4 / CP4).